An 883-amino-acid chain; its full sequence is DNA mismatch repair protein MutS (883 aa).

Residues 1–25 (MSDSVAPDVPVIREGKNPAQHRDRT) form a disordered region. Basic and acidic residues predominate over residues 11-25 (VIREGKNPAQHRDRT). 664–671 (GPNASGKS) is an ATP binding site. The segment at 857–883 (RKGNTQPRARKSSAETEAKTQQFELPF) is disordered.

Belongs to the DNA mismatch repair MutS family.

Functionally, this protein is involved in the repair of mismatches in DNA. It is possible that it carries out the mismatch recognition step. This protein has a weak ATPase activity. The polypeptide is DNA mismatch repair protein MutS (Acaryochloris marina (strain MBIC 11017)).